The chain runs to 168 residues: Photosystem I assembly protein Ycf3 (168 aa).

TPR repeat units follow at residues 35 to 68 (AFTY…EIDP), 72 to 105 (SYIL…NPFL), and 120 to 153 (GEQA…TPGN).

Belongs to the Ycf3 family.

Its subcellular location is the plastid. The protein resides in the chloroplast thylakoid membrane. Functionally, essential for the assembly of the photosystem I (PSI) complex. May act as a chaperone-like factor to guide the assembly of the PSI subunits. The chain is Photosystem I assembly protein Ycf3 from Acorus calamus var. americanus (American sweet flag).